Here is a 187-residue protein sequence, read N- to C-terminus: Probable cobalt-precorrin-6B C(15)-methyltransferase (decarboxylating) (187 aa).

Residues Thr-15, 39–43 (GSCTG), Glu-60, and Ala-89 each bind S-adenosyl-L-methionine.

This sequence belongs to the methyltransferase superfamily. Archaeal-type CbiT family.

It catalyses the reaction Co-precorrin-6B + S-adenosyl-L-methionine = Co-precorrin-7 + S-adenosyl-L-homocysteine + CO2. It participates in cofactor biosynthesis; adenosylcobalamin biosynthesis; cob(II)yrinate a,c-diamide from sirohydrochlorin (anaerobic route): step 8/10. Catalyzes the methylation of C-15 in cobalt-precorrin-6B followed by the decarboxylation of C-12 to form cobalt-precorrin-7. This chain is Probable cobalt-precorrin-6B C(15)-methyltransferase (decarboxylating), found in Halobacterium salinarum (strain ATCC 700922 / JCM 11081 / NRC-1) (Halobacterium halobium).